The primary structure comprises 254 residues: PF03932 family protein CutC (254 aa).

The protein belongs to the CutC family.

Its subcellular location is the cytoplasm. The sequence is that of PF03932 family protein CutC from Yersinia pestis bv. Antiqua (strain Angola).